A 427-amino-acid polypeptide reads, in one-letter code: Adenylosuccinate synthetase (427 aa).

GTP-binding positions include 12-18 (GDEGKGK) and 40-42 (GHT). The Proton acceptor role is filled by aspartate 13. Residues aspartate 13 and glycine 40 each contribute to the Mg(2+) site. IMP contacts are provided by residues 13–16 (DEGK), 38–41 (NAGH), threonine 126, arginine 140, glutamine 221, threonine 236, and arginine 299. The Proton donor role is filled by histidine 41. Substrate is bound at residue 295–301 (STTKRPR). GTP contacts are provided by residues arginine 301, 327–329 (KLD), and 409–411 (SVG).

Belongs to the adenylosuccinate synthetase family. In terms of assembly, homodimer. It depends on Mg(2+) as a cofactor.

Its subcellular location is the cytoplasm. It catalyses the reaction IMP + L-aspartate + GTP = N(6)-(1,2-dicarboxyethyl)-AMP + GDP + phosphate + 2 H(+). The protein operates within purine metabolism; AMP biosynthesis via de novo pathway; AMP from IMP: step 1/2. In terms of biological role, plays an important role in the de novo pathway of purine nucleotide biosynthesis. Catalyzes the first committed step in the biosynthesis of AMP from IMP. The chain is Adenylosuccinate synthetase from Borrelia duttonii (strain Ly).